The primary structure comprises 366 residues: Putative zinc metalloprotease slr1821 (366 aa).

Residue H20 coordinates Zn(2+). The active site involves E21. H24 serves as a coordination point for Zn(2+). The next 3 membrane-spanning stretches (helical) occupy residues 95 to 115 (AIVI…LLIG), 293 to 313 (AVIN…FLLI), and 325 to 345 (FQMG…VFLI). In terms of domain architecture, PDZ spans 106 to 188 (LVFAYFLLIG…VPITVEVQRG (83 aa)).

This sequence belongs to the peptidase M50B family. Requires Zn(2+) as cofactor.

The protein resides in the cell inner membrane. This is Putative zinc metalloprotease slr1821 from Synechocystis sp. (strain ATCC 27184 / PCC 6803 / Kazusa).